A 72-amino-acid polypeptide reads, in one-letter code: Translation initiation factor IF-1 (72 aa).

The 72-residue stretch at 1-72 (MAKEESIEVE…SKGRITYRYK (72 aa)) folds into the S1-like domain.

It belongs to the IF-1 family. In terms of assembly, component of the 30S ribosomal translation pre-initiation complex which assembles on the 30S ribosome in the order IF-2 and IF-3, IF-1 and N-formylmethionyl-tRNA(fMet); mRNA recruitment can occur at any time during PIC assembly.

The protein resides in the cytoplasm. Its function is as follows. One of the essential components for the initiation of protein synthesis. Stabilizes the binding of IF-2 and IF-3 on the 30S subunit to which N-formylmethionyl-tRNA(fMet) subsequently binds. Helps modulate mRNA selection, yielding the 30S pre-initiation complex (PIC). Upon addition of the 50S ribosomal subunit IF-1, IF-2 and IF-3 are released leaving the mature 70S translation initiation complex. This is Translation initiation factor IF-1 from Chlorobaculum tepidum (strain ATCC 49652 / DSM 12025 / NBRC 103806 / TLS) (Chlorobium tepidum).